The sequence spans 446 residues: Tripartite motif-containing protein 43C (446 aa).

The RING-type zinc finger occupies 16–57 (CSICQGIFMDPVYLRCGHKFCETCLLLFQEDIKFPAYCPTCR). The segment at 88-129 (SEEHKCVTHKAKKMIFCDKSKILLCHLCSDSQEHSGHTHCSI) adopts a B box-type zinc-finger fold. 4 residues coordinate Zn(2+): C93, H96, C115, and H121. Residues 271–446 (RLRAHSIPGL…VRPFFFAAYT (176 aa)) enclose the B30.2/SPRY domain.

It belongs to the TRIM/RBCC family.

The protein is Tripartite motif-containing protein 43C of Mus musculus (Mouse).